The primary structure comprises 64 residues: DNA gyrase inhibitor YacG (64 aa).

Positions 9, 12, 28, and 32 each coordinate Zn(2+). The disordered stretch occupies residues 45-64 (KRIPSSGDLSESDDWSEEPK). Residues 54 to 64 (SESDDWSEEPK) show a composition bias toward acidic residues.

It belongs to the DNA gyrase inhibitor YacG family. As to quaternary structure, interacts with GyrB. The cofactor is Zn(2+).

Inhibits all the catalytic activities of DNA gyrase by preventing its interaction with DNA. Acts by binding directly to the C-terminal domain of GyrB, which probably disrupts DNA binding by the gyrase. This chain is DNA gyrase inhibitor YacG, found in Escherichia fergusonii (strain ATCC 35469 / DSM 13698 / CCUG 18766 / IAM 14443 / JCM 21226 / LMG 7866 / NBRC 102419 / NCTC 12128 / CDC 0568-73).